Reading from the N-terminus, the 400-residue chain is Enoyl-[acyl-carrier-protein] reductase [NADH] 2 (400 aa).

NAD(+) is bound by residues 48–53 (GASSGF), 75–76 (FE), 112–113 (DA), and 141–142 (LA). Y228 contacts substrate. The Proton donor role is filled by Y238. NAD(+) is bound by residues K247 and 276–278 (LVT).

Belongs to the TER reductase family. Monomer.

It catalyses the reaction a 2,3-saturated acyl-[ACP] + NAD(+) = a (2E)-enoyl-[ACP] + NADH + H(+). The protein operates within lipid metabolism; fatty acid biosynthesis. In terms of biological role, involved in the final reduction of the elongation cycle of fatty acid synthesis (FAS II). Catalyzes the reduction of a carbon-carbon double bond in an enoyl moiety that is covalently linked to an acyl carrier protein (ACP). The protein is Enoyl-[acyl-carrier-protein] reductase [NADH] 2 of Vibrio vulnificus (strain CMCP6).